A 253-amino-acid chain; its full sequence is Isoprenyl transferase (253 aa).

Aspartate 30 is a catalytic residue. Residue aspartate 30 coordinates Mg(2+). Residues 31–34, tryptophan 35, histidine 51, and 79–81 contribute to the substrate site; these read GNRR and STE. The Proton acceptor role is filled by asparagine 82. Substrate contacts are provided by residues phenylalanine 83, arginine 85, arginine 202, and 208–210; that span reads RVS. Glutamate 221 is a binding site for Mg(2+).

Belongs to the UPP synthase family. In terms of assembly, homodimer. Mg(2+) serves as cofactor.

Functionally, catalyzes the condensation of isopentenyl diphosphate (IPP) with allylic pyrophosphates generating different type of terpenoids. The sequence is that of Isoprenyl transferase from Chlamydia muridarum (strain MoPn / Nigg).